Consider the following 1049-residue polypeptide: Dyslexia-associated protein KIAA0319-like protein (1049 aa).

Residues Met1 to Arg29 are Cytoplasmic-facing. Residues Ser30–Ser50 traverse the membrane as a helical segment. In terms of domain architecture, MANSC spans Ala49 to Met127. Over Glu51 to Tyr932 the chain is Extracellular. N-linked (GlcNAc...) asparagine glycans are attached at residues Asn247, Asn395, Asn472, Asn487, and Asn525. PKD domains are found at residues Ser312–Glu401, Ile409–Ala498, Val504–Glu594, Gln600–Glu688, and Ile694–Asp785. Residues Val933–Cys953 traverse the membrane as a helical segment. Topologically, residues Cys954–Leu1049 are cytoplasmic. Phosphothreonine is present on Thr974. Phosphoserine occurs at positions 978, 1009, and 1031. The interval Gly1022–Leu1049 is disordered. Residues Gln1028–Thr1037 show a composition bias toward polar residues. Thr1037 bears the Phosphothreonine mark.

As to quaternary structure, interacts with RTN4R. In terms of assembly, (Microbial infection) Interacts with AAV-2 VP1. Post-translationally, N-glycosylated. As to expression, expressed in cortical neurons in the brain cortex (at protein level).

The protein localises to the cytoplasmic granule membrane. The protein resides in the golgi apparatus membrane. It localises to the golgi apparatus. Its subcellular location is the trans-Golgi network membrane. It is found in the cell membrane. Possible role in axon guidance through interaction with RTN4R. In terms of biological role, (Microbial infection) Acts as a receptor for adeno-associated virus and is involved in adeno-associated virus infection through endocytosis system. This chain is Dyslexia-associated protein KIAA0319-like protein, found in Homo sapiens (Human).